A 175-amino-acid polypeptide reads, in one-letter code: Anterior gradient protein 2 homolog (175 aa).

An N-terminal signal peptide occupies residues 1–20; that stretch reads MEKISVSAFLLLVALSYTLA. The segment at 21-40 is required to promote cell adhesion; sequence RDTTVKPAAKKDTKDSRPKL. Short sequence motifs (homodimer stabilization; interchain) lie at residues 45–54 and 60–67; these read SRGWGDQLIW and EALYKSKT.

The protein belongs to the AGR family. In terms of assembly, monomer and homodimer. Interacts with LYPD3 and DAG1 (alphaDAG1). Interacts with MUC2; disulfide-linked.

The protein localises to the secreted. Its subcellular location is the endoplasmic reticulum. Required for MUC2 post-transcriptional synthesis and secretion. May play a role in the production of mucus by intestinal cells. Proto-oncogene that may play a role in cell migration, cell differentiation and cell growth. Promotes cell adhesion. This chain is Anterior gradient protein 2 homolog (AGR2), found in Pongo abelii (Sumatran orangutan).